The sequence spans 324 residues: MLKASLKSIASYIPEKILSNADLEKMVDTTDEWITRRTGIKERRIASENENTSDLGTKAALKAIERANLKPEDIDAILVATLSPDYFTMPSTACKIASNLGLVNISAFDISAACSGFIYLLEQAKALVESGLKKNVLIIGAEKTSSIMDYNDRSICILFGDGAGAGVVSLDNENHILDVHTASNGNYGDLLMTQRSQKSSLCQTLSMQMKGNEVFKIAVNTLSNDVVEILAKNNILAQEIDLFIPHQANLRIIKAVQEKLNLSDEKCVITVQKYGNTSAASIPMAMNDAYEEGRLKKGNLILLDAFGGGFTWGSALLKFGGENF.

Residues C114 and H246 contribute to the active site. The interval 247-251 is ACP-binding; the sequence is QANLR. Residue N276 is part of the active site.

It belongs to the thiolase-like superfamily. FabH family. In terms of assembly, homodimer.

Its subcellular location is the cytoplasm. The catalysed reaction is malonyl-[ACP] + acetyl-CoA + H(+) = 3-oxobutanoyl-[ACP] + CO2 + CoA. The protein operates within lipid metabolism; fatty acid biosynthesis. In terms of biological role, catalyzes the condensation reaction of fatty acid synthesis by the addition to an acyl acceptor of two carbons from malonyl-ACP. Catalyzes the first condensation reaction which initiates fatty acid synthesis and may therefore play a role in governing the total rate of fatty acid production. Possesses both acetoacetyl-ACP synthase and acetyl transacylase activities. Its substrate specificity determines the biosynthesis of branched-chain and/or straight-chain of fatty acids. In Campylobacter jejuni subsp. jejuni serotype O:2 (strain ATCC 700819 / NCTC 11168), this protein is Beta-ketoacyl-[acyl-carrier-protein] synthase III.